The chain runs to 322 residues: 4-hydroxythreonine-4-phosphate dehydrogenase (322 aa).

Threonine 132 provides a ligand contact to substrate. Positions 160, 205, and 260 each coordinate a divalent metal cation. The substrate site is built by lysine 268, asparagine 277, and arginine 286.

The protein belongs to the PdxA family. In terms of assembly, homodimer. It depends on Zn(2+) as a cofactor. Mg(2+) is required as a cofactor. Requires Co(2+) as cofactor.

It localises to the cytoplasm. It carries out the reaction 4-(phosphooxy)-L-threonine + NAD(+) = 3-amino-2-oxopropyl phosphate + CO2 + NADH. The protein operates within cofactor biosynthesis; pyridoxine 5'-phosphate biosynthesis; pyridoxine 5'-phosphate from D-erythrose 4-phosphate: step 4/5. In terms of biological role, catalyzes the NAD(P)-dependent oxidation of 4-(phosphooxy)-L-threonine (HTP) into 2-amino-3-oxo-4-(phosphooxy)butyric acid which spontaneously decarboxylates to form 3-amino-2-oxopropyl phosphate (AHAP). The chain is 4-hydroxythreonine-4-phosphate dehydrogenase from Xanthomonas campestris pv. campestris (strain B100).